The following is a 291-amino-acid chain: Ajmaline N-methyltransferase (291 aa).

Positions 71–80 (MLDVGCGIGG) are SAM motif I. A Vacuolar targeting signal motif is present at residues 133 to 139 (DGAFDLV). The SAM motif II stretch occupies residues 134 to 142 (GAFDLVLSI). The segment at 161 to 170 (VAASGATIII) is SAM motif III.

It belongs to the class I-like SAM-binding methyltransferase superfamily. gTMT family. As to quaternary structure, homodimer. Mainly expressed in roots, but barely detectable in stems and flowers.

The protein resides in the vacuole membrane. The catalysed reaction is ajmaline + S-adenosyl-L-methionine = 4-methylajmaline + S-adenosyl-L-homocysteine + H(+). It catalyses the reaction norajmaline + S-adenosyl-L-methionine = 4-methylnorajmaline + S-adenosyl-L-homocysteine + H(+). It functions in the pathway alkaloid biosynthesis; ajmaline biosynthesis. In terms of biological role, N-methyltransferase involved in the biosynthesis of ajmaline-type monoterpenoid indole alkaloids (MIAs) natural products, important plant-derived pharmaceuticals used in the therapy of heart disorders. Catalyzes the indole N-methylation of ajmaline to produce 4-methylajmaline. Also able, with a lower efficiency, to mediates the conversion of norajmaline to 4-methylnorajmaline. The chain is Ajmaline N-methyltransferase from Rauvolfia serpentina (Serpentine wood).